The following is a 556-amino-acid chain: Secreted RxLR effector protein 114 (556 aa).

An N-terminal signal peptide occupies residues 1–19; it reads MCGAHFVAIALLVAAGCQT. 3 disordered regions span residues 43 to 76, 108 to 138, and 389 to 408; these read LQSR…GVLK, NQLK…DSDK, and NDKS…EDWN. A RxLR-dEER motif is present at residues 46–66; that stretch reads RNLRESRDSKDDLLSAGDEER. Over residues 47–67 the composition is skewed to basic and acidic residues; it reads NLRESRDSKDDLLSAGDEERT.

It belongs to the RxLR effector family.

It is found in the secreted. It localises to the host cell. In terms of biological role, secreted effector that partially suppresses the host cell death induced by cell death-inducing proteins. This chain is Secreted RxLR effector protein 114, found in Plasmopara viticola (Downy mildew of grapevine).